A 159-amino-acid polypeptide reads, in one-letter code: MIDSDGFRPNVGIILANEAGQVLWARRINQEAWQFPQGGINDRETPEEALYRELNEEVGLEAGDVRILACTRGWLRYRLPQRLVRTHSQPLCIGQKQKWFLLRLMSDEARVRMDITSKPEFDGWRWVSYWYPLGQVVTFKREVYRRALKELAPRLLARD.

A Nudix hydrolase domain is found at 6 to 149 (GFRPNVGIIL…KREVYRRALK (144 aa)). Residues 38–59 (GGINDRETPEEALYRELNEEVG) carry the Nudix box motif.

The protein belongs to the Nudix hydrolase family. RppH subfamily. Requires a divalent metal cation as cofactor.

In terms of biological role, accelerates the degradation of transcripts by removing pyrophosphate from the 5'-end of triphosphorylated RNA, leading to a more labile monophosphorylated state that can stimulate subsequent ribonuclease cleavage. In Pseudomonas aeruginosa (strain LESB58), this protein is RNA pyrophosphohydrolase.